Reading from the N-terminus, the 125-residue chain is Small ribosomal subunit protein uS12m (125 aa).

The disordered stretch occupies residues 1–51 (MPTKNQLIRHGREEKRRTDRTRALDQCPQKQGVCPRVSTRTPKKPNSAPRK). Positions 10–23 (HGREEKRRTDRTRA) are enriched in basic and acidic residues.

The protein belongs to the universal ribosomal protein uS12 family.

It localises to the mitochondrion. Its function is as follows. Protein S12 is involved in the translation initiation step. The polypeptide is Small ribosomal subunit protein uS12m (RPS12) (Nicotiana sylvestris (Wood tobacco)).